Reading from the N-terminus, the 394-residue chain is RHOMBOID-like protein 4 (394 aa).

The tract at residues 1–51 (MGEKDSETAPIWGKTRERERSNNNNIQPMDLESSSSVSGQQRSLTQSRSSY) is disordered. The span at 39–49 (GQQRSLTQSRS) shows a compositional bias: polar residues. The next 7 helical transmembrane spans lie at 64–84 (WFPW…VITM), 147–167 (WLHG…FIGI), 175–195 (FIRI…LSAL), 201–221 (ISVG…SEIF), 231–251 (VVTI…GVLP), 254–274 (DNFA…VLLI), and 300–320 (ILWT…LISL). S206 (nucleophile) is an active-site residue. H258 acts as the Charge relay system in catalysis.

It belongs to the peptidase S54 family.

The protein resides in the membrane. It catalyses the reaction Cleaves type-1 transmembrane domains using a catalytic dyad composed of serine and histidine that are contributed by different transmembrane domains.. Functionally, probable rhomboid-type serine protease that catalyzes intramembrane proteolysis. This Arabidopsis thaliana (Mouse-ear cress) protein is RHOMBOID-like protein 4.